The sequence spans 2094 residues: Nuclear mitotic apparatus protein 1 (2094 aa).

Positions 1–210 (MTLHATRAAT…SPMGDILQTP (210 aa)) are head (Globular). The residue at position 160 (S160) is a Phosphoserine. Residue T161 is modified to Phosphothreonine. A phosphoserine mark is found at S167 and S201. Phosphothreonine is present on T209. Residues 211–1681 (QFQMRRLKKQ…ADQQLRDLGK (1471 aa)) are a coiled coil. S269 is modified (phosphoserine). K377 is subject to N6-acetyllysine. Phosphoserine occurs at positions 386 and 398. An N6-acetyllysine modification is found at K443. 2 disordered regions span residues 617–636 (QLQAANDARDNAQTSVTQAQ) and 723–759 (LKEQQCRATEMEAESRSLMEQREREQKELEQEKAGRK). Polar residues predominate over residues 627–636 (NAQTSVTQAQ). K878 bears the N6-acetyllysine mark. Disordered regions lie at residues 921–1000 (SLEL…TQER), 1081–1143 (LVKK…EGLT), and 1173–1223 (ELGH…SSLI). Polar residues predominate over residues 935 to 951 (ASDQLGEQQGRPFSSTH). Composition is skewed to basic and acidic residues over residues 956–972 (AMEREAEQMGGELERLR) and 983–998 (QEERGQQEREVARLTQ). The residue at position 1183 (S1183) is a Phosphoserine. Positions 1194 to 1206 (KAQDHSKAEEEWK) are enriched in basic and acidic residues. The residue at position 1221 (S1221) is a Phosphoserine. The residue at position 1507 (K1507) is an N6-acetyllysine. S1583 is subject to Phosphoserine. K1681 is covalently cross-linked (Glycyl lysine isopeptide (Lys-Gly) (interchain with G-Cter in SUMO2)). The tract at residues 1681 to 1858 (KFQVATDALK…NSALLSLPGY (178 aa)) is membrane-binding domain 1. Residues 1682 to 2094 (FQVATDALKS…TPRAKGKVKH (413 aa)) are tail (Globular). A phosphoserine mark is found at S1703, S1706, and S1710. The interval 1718-1743 (SVASKLPRTQPDGTSVPGEPASPISQ) is disordered. The Tankyrase-binding domain motif lies at 1724–1730 (PRTQPDG). 2 positions are modified to phosphoserine: S1739 and S1742. K1748 is covalently cross-linked (Glycyl lysine isopeptide (Lys-Gly) (interchain with G-Cter in SUMO1); alternate). A Glycyl lysine isopeptide (Lys-Gly) (interchain with G-Cter in SUMO2); alternate cross-link involves residue K1748. S1751 is modified (phosphoserine). The residue at position 1754 (S1754) is a Phosphoserine; by PLK1. A Phosphotyrosine modification is found at Y1756. A Phosphothreonine modification is found at T1758. The segment at 1760 to 1795 (TPARGQAPLETSLDSLGDAFPDSGRKTRSARRRTTQ) is disordered. Residues 1770–1792 (TSLDSLGDAFPDSGRKTRSARRR) form a 4.1-binding domain region. The residue at position 1771 (S1771) is a Phosphoserine; by PLK1. A phosphoserine mark is found at S1774 and S1782. Position 1786 is a phosphothreonine (T1786). K1804 is covalently cross-linked (Glycyl lysine isopeptide (Lys-Gly) (interchain with G-Cter in SUMO2)). 2 disordered regions span residues 1807 to 1883 (LEEP…GRNS) and 1937 to 2094 (EMKT…KVKH). Phosphoserine occurs at positions 1812 and 1815. Residues 1812–1839 (SANSSFYSTQSAPASQANLRATSSTQSL) show a composition bias toward polar residues. S1816 carries the post-translational modification Phosphoserine; by PLK1. Y1818 is modified (phosphotyrosine). S1822 is modified (phosphoserine). S1826 is modified (phosphoserine; alternate). S1826 is a glycosylation site (O-linked (GlcNAc) serine; alternate). Residues S1844 and S1869 each carry the phosphoserine modification. The tract at residues 1864–1967 (SSARRSQARM…AEGVGITTRQ (104 aa)) is tubulin-binding domain. The interval 1874-1908 (SSGAPQGRNSFYMGTCQDEPEQLDDWNRIAELQQR) is GPSM2-binding domain. Residues 1937-1948 (EMKTGDPRETLR) are compositionally biased toward basic and acidic residues. S1951 bears the Phosphoserine mark. Positions 1963–2042 (ITTRQQRKRV…SILNTPKKLG (80 aa)) are membrane-binding domain 2. Positions 1966 to 1971 (RQQRKR) match the Nuclear localization signal motif. Phosphoserine is present on residues S1973 and S1974. T1982 carries the phosphothreonine modification. S1985 carries the post-translational modification Phosphoserine. T1997 is modified (phosphothreonine; by CDK1). Positions 1997-2006 (TPRDRHEGRK) are enriched in basic and acidic residues. S2029 bears the Phosphoserine mark. The residue at position 2037 (T2037) is a Phosphothreonine. A phosphoserine mark is found at S2044 and S2059. At S2069 the chain carries Phosphoserine; by CDK1. The segment covering 2073 to 2085 (ATTTTGTATVATT) has biased composition (low complexity). T2085 carries the phosphothreonine; by CDK1 modification.

As to quaternary structure, homodimer. Also forms multiarm oligomers by association of C-terminal tail domains, oligomers may further assemble to form a hexagonal nuclear lattice-like network. Associates with the dynein-dynactin complex; this association promotes the transport and accumulation of NUMA1 at the mitotic spindle poles that is inhibited by the BRISC complex in a PLK1-dependent manner. Part of a spindle orientation complex at least composed of GNAI1, GPSM2 and NUMA1. Interacts (via C-terminus) with microtubules (MTs); this interaction is direct and promotes both MT bundle formation and stability in a dynein-dynactin complex- and CDK1-independent manner. Interacts with EPB41 and EPB41L2; these interactions are negatively regulated by CDK1 during metaphase and are important for anaphase-specific localization of NUMA1 in symmetrically dividing cells. Interacts (via C-terminus) with GPSM2 (via TPR repeats); this interaction is direct, prevented by competitive binding of INSC, is inhibited in a PLK1-dependent manner, blocks the association of NUMA1 with MTs and inhibits NUMA1-induced MT bundle formation, prevents the association of NUMA1 with SPAG5, induces mitotic spindle pole localization of GPSM2, both metaphase cell cortex localization of NUMA1 and mitotic spindle organization. Does not interact with GPSM2 during anaphase. Interacts (via C-terminus) with the nuclear importin alpha/importin beta receptor; this interaction is inhibited by RanGTP. Interacts (via C-terminus) with KPNB1; this interaction is inhibited by RanGTP and the BRISC complex. Interacts with ABRAXAS2 and the BRISC complex; these interactions regulate mitotic spindle assembly. Interacts (via N-terminal end of the coiled-coil domain) with RAE1; this interaction promotes mitotic spindle formation. Interacts (via C-terminus) with SPAG5 (via C-terminus); this interaction promotes the recruitment of SPAG5 to the MTs at spindle poles in a dynein-dynactin-dependent manner and regulates mitotic spindle organization and proper chromosome alignment during mitosis. Interacts with TNKS; this interaction occurs at the onset of mitosis. Interacts with TNKS2. Interacts with tubulin. Interacts with KHDC3 (via C-terminus). Phosphorylation and dephosphorylation on Thr-2037 regulates the extent of cortical NUMA1 and the dynein-dynactin complex localization during mitotic metaphase and anaphase. In metaphase, phosphorylation on Thr-2037 occurs in a kinase CDK1-dependent manner; this phosphorylation maintains low levels of cortical dynein-dynactin complex at metaphase, and hence proper spindle positioning. In anaphase, dephosphorylated on Thr-2037 by phosphatase PPP2CA; this dephosphorylation stimulates its membrane association and with the dynein-dynactin complex its enrichment at the cell cortex, and hence robust spindle elongation. Probably also phosphorylated on Thr-1997 and Ser-2069 by CDK1; these phosphorylations may regulate its cell cortex recruitment during metaphase and anaphase. Phosphorylated on Ser-1751, Ser-1754, Ser-1771 and Ser-1816 by PLK1; these phosphorylations induce cortical dynein-dynactin complex dissociation from the NUMA1-GPSM2 complex and negatively regulates cortical dynein-dynactin complex localization. Post-translationally, ADP-ribosylated by TNKS at the onset of mitosis; ADP-ribosylation is not required for its localization to spindle poles. In terms of processing, O-glycosylated during cytokinesis at sites identical or close to phosphorylation sites, this interferes with the phosphorylation status. Ubiquitinated with 'Lys-63'-linked polyubiquitin chains. Deubiquitination by the BRISC complex is important for the incorporation of NUMA1 into mitotic spindle poles and normal spindle pole function, probably by modulating interactions between NUMA1, dynein-dynactin complex and importin-beta. In terms of tissue distribution, expressed in testis, speen, liver, lung, spinal cord and brain. Expressed in Purkinje neurons (at protein level).

Its subcellular location is the nucleus. It localises to the nucleoplasm. The protein localises to the nucleus matrix. It is found in the chromosome. The protein resides in the cytoplasm. Its subcellular location is the cytoskeleton. It localises to the microtubule organizing center. The protein localises to the centrosome. It is found in the spindle pole. The protein resides in the cell cortex. Its subcellular location is the cell membrane. It localises to the lateral cell membrane. Microtubule (MT)-binding protein that plays a role in the formation and maintenance of the spindle poles and the alignement and the segregation of chromosomes during mitotic cell division. Functions to tether the minus ends of MTs at the spindle poles, which is critical for the establishment and maintenance of the spindle poles. Plays a role in the establishment of the mitotic spindle orientation during metaphase and elongation during anaphase in a dynein-dynactin-dependent manner. In metaphase, part of a ternary complex composed of GPSM2 and G(i) alpha proteins, that regulates the recruitment and anchorage of the dynein-dynactin complex in the mitotic cell cortex regions situated above the two spindle poles, and hence regulates the correct oritentation of the mitotic spindle. During anaphase, mediates the recruitment and accumulation of the dynein-dynactin complex at the cell membrane of the polar cortical region through direct association with phosphatidylinositol 4,5-bisphosphate (PI(4,5)P2), and hence participates in the regulation of the spindle elongation and chromosome segregation. Also binds to other polyanionic phosphoinositides, such as phosphatidylinositol 3-phosphate (PIP), lysophosphatidic acid (LPA) and phosphatidylinositol triphosphate (PIP3), in vitro. Also required for proper orientation of the mitotic spindle during asymmetric cell divisions. Plays a role in mitotic MT aster assembly. Involved in anastral spindle assembly. Positively regulates TNKS protein localization to spindle poles in mitosis. Highly abundant component of the nuclear matrix where it may serve a non-mitotic structural role, occupies the majority of the nuclear volume. Required for epidermal differentiation and hair follicle morphogenesis. The protein is Nuclear mitotic apparatus protein 1 of Mus musculus (Mouse).